The sequence spans 359 residues: 3-dehydroquinate synthase (359 aa).

Residues 72 to 77 (DGEQYK), 106 to 110 (GVIGD), 130 to 131 (TT), lysine 143, lysine 152, and 170 to 173 (CLKT) contribute to the NAD(+) site. Residues glutamate 185, histidine 248, and histidine 265 each coordinate Zn(2+).

The protein belongs to the sugar phosphate cyclases superfamily. Dehydroquinate synthase family. Requires Co(2+) as cofactor. The cofactor is Zn(2+). It depends on NAD(+) as a cofactor.

It localises to the cytoplasm. The catalysed reaction is 7-phospho-2-dehydro-3-deoxy-D-arabino-heptonate = 3-dehydroquinate + phosphate. It functions in the pathway metabolic intermediate biosynthesis; chorismate biosynthesis; chorismate from D-erythrose 4-phosphate and phosphoenolpyruvate: step 2/7. In terms of biological role, catalyzes the conversion of 3-deoxy-D-arabino-heptulosonate 7-phosphate (DAHP) to dehydroquinate (DHQ). The protein is 3-dehydroquinate synthase of Photobacterium profundum (strain SS9).